A 137-amino-acid chain; its full sequence is Glutamyl-tRNA(Gln) amidotransferase subunit C, chloroplastic/mitochondrial (137 aa).

Belongs to the GatC family. In terms of assembly, subunit of the heterotrimeric GatCAB amidotransferase (AdT) complex, composed of A, B and C subunits.

The protein localises to the mitochondrion. The protein resides in the plastid. Its subcellular location is the chloroplast. It carries out the reaction L-glutamyl-tRNA(Gln) + L-glutamine + ATP + H2O = L-glutaminyl-tRNA(Gln) + L-glutamate + ADP + phosphate + H(+). Its function is as follows. Allows the formation of correctly charged Gln-tRNA(Gln) through the transamidation of misacylated Glu-tRNA(Gln) in chloroplasts and mitochondria. The reaction takes place in the presence of glutamine and ATP through an activated gamma-phospho-Glu-tRNA(Gln). The protein is Glutamyl-tRNA(Gln) amidotransferase subunit C, chloroplastic/mitochondrial of Vitis vinifera (Grape).